We begin with the raw amino-acid sequence, 979 residues long: Protocadherin alpha-9 (979 aa).

Positions 1–59 are cleaved as a signal peptide; the sequence is MRLGNRPEDIRTCVHLRWHIHGLLRQENASVVISKCLRHGAWRLLLWLLLLATWDVGSG. The Extracellular segment spans residues 60–726; it reads QLHYSVPEEA…RREASLMDVN (667 aa). 6 Cadherin domains span residues 64–163, 164–272, 273–380, 381–485, 486–595, and 611–707; these read SVPE…PPIF, SVAE…APVF, DRSV…APEI, VLTS…APAF, AHPE…PPTL, and VSRS…VPKA. Residues asparagine 287 and asparagine 295 are each glycosylated (N-linked (GlcNAc...) asparagine). Asparagine 578 is a glycosylation site (N-linked (GlcNAc...) asparagine). Residues 727–747 traverse the membrane as a helical segment; that stretch reads VYLIIAICAVSSLLVLTLLLY. The Cytoplasmic portion of the chain corresponds to 748-979; sequence TALRCSAVPM…GNSTTDNSDQ (232 aa). 5 PXXP repeats span residues 763–766, 828–831, 861–864, 902–905, and 920–923; these read LGKP, PRQP, PGGP, PGNP, and PGSP. Residues 763-923 form a 5 X 4 AA repeats of P-X-X-P region; that stretch reads LGKPTLVCSS…PDKFIIPGSP (161 aa). Positions 859–979 are disordered; sequence AGPGGPDQQW…GNSTTDNSDQ (121 aa). The span at 938 to 952 shows a compositional bias: basic and acidic residues; sequence DKSDFITFGKKEETK.

Its subcellular location is the cell membrane. Functionally, potential calcium-dependent cell-adhesion protein. May be involved in the establishment and maintenance of specific neuronal connections in the brain. This is Protocadherin alpha-9 from Mus musculus (Mouse).